Here is a 270-residue protein sequence, read N- to C-terminus: Glutamate 5-kinase (270 aa).

K15 provides a ligand contact to ATP. Residues S55, D142, and N158 each contribute to the substrate site. Residues 178–179 (SD) and 220–226 (TGGMLSK) each bind ATP.

This sequence belongs to the glutamate 5-kinase family.

It localises to the cytoplasm. The catalysed reaction is L-glutamate + ATP = L-glutamyl 5-phosphate + ADP. It functions in the pathway amino-acid biosynthesis; L-proline biosynthesis; L-glutamate 5-semialdehyde from L-glutamate: step 1/2. In terms of biological role, catalyzes the transfer of a phosphate group to glutamate to form L-glutamate 5-phosphate. This Streptococcus uberis (strain ATCC BAA-854 / 0140J) protein is Glutamate 5-kinase.